The chain runs to 432 residues: Adenylosuccinate synthetase (432 aa).

GTP-binding positions include 12 to 18 and 40 to 42; these read GDEGKGK and GHT. Asp13 acts as the Proton acceptor in catalysis. Residues Asp13 and Gly40 each contribute to the Mg(2+) site. IMP-binding positions include 13 to 16, 38 to 41, Thr129, Arg143, Gln224, Thr239, and Arg303; these read DEGK and NAGH. The active-site Proton donor is His41. 299-305 is a substrate binding site; that stretch reads VTTGRRR. GTP is bound by residues Arg305, 331–333, and 413–415; these read KLD and GVG.

It belongs to the adenylosuccinate synthetase family. Homodimer. Mg(2+) serves as cofactor.

It localises to the cytoplasm. The catalysed reaction is IMP + L-aspartate + GTP = N(6)-(1,2-dicarboxyethyl)-AMP + GDP + phosphate + 2 H(+). Its pathway is purine metabolism; AMP biosynthesis via de novo pathway; AMP from IMP: step 1/2. In terms of biological role, plays an important role in the de novo pathway of purine nucleotide biosynthesis. Catalyzes the first committed step in the biosynthesis of AMP from IMP. The chain is Adenylosuccinate synthetase from Mycobacterium avium (strain 104).